Consider the following 145-residue polypeptide: Ribosomal RNA large subunit methyltransferase H (145 aa).

Residues L64, G93, and 112-117 (LSPLTF) contribute to the S-adenosyl-L-methionine site.

Belongs to the RNA methyltransferase RlmH family. As to quaternary structure, homodimer.

The protein localises to the cytoplasm. It carries out the reaction pseudouridine(1915) in 23S rRNA + S-adenosyl-L-methionine = N(3)-methylpseudouridine(1915) in 23S rRNA + S-adenosyl-L-homocysteine + H(+). Specifically methylates the pseudouridine at position 1915 (m3Psi1915) in 23S rRNA. The sequence is that of Ribosomal RNA large subunit methyltransferase H from Prochlorococcus marinus (strain NATL1A).